A 68-amino-acid polypeptide reads, in one-letter code: KCNQ1 downstream neighbor protein (68 aa).

Residues 28 to 68 are disordered; that stretch reads GVASGCSPSKASQEARGKEKCPTLNGQPQWSALFTLPPQRE.

In terms of tissue distribution, shows reduced expression in Wilms' tumor samples.

This is KCNQ1 downstream neighbor protein (KCNQ1DN) from Homo sapiens (Human).